The primary structure comprises 542 residues: Chaperonin GroEL (542 aa).

ATP-binding positions include 30 to 33 (TLGP), Lys51, 87 to 91 (DGTTT), Gly415, 480 to 482 (NAA), and Asp496.

It belongs to the chaperonin (HSP60) family. As to quaternary structure, forms a cylinder of 14 subunits composed of two heptameric rings stacked back-to-back. Interacts with the co-chaperonin GroES.

It is found in the cytoplasm. The catalysed reaction is ATP + H2O + a folded polypeptide = ADP + phosphate + an unfolded polypeptide.. In terms of biological role, together with its co-chaperonin GroES, plays an essential role in assisting protein folding. The GroEL-GroES system forms a nano-cage that allows encapsulation of the non-native substrate proteins and provides a physical environment optimized to promote and accelerate protein folding. The chain is Chaperonin GroEL from Tremblaya princeps.